Consider the following 561-residue polypeptide: Lanosterol 14-alpha demethylase (561 aa).

Cys501 contributes to the heme binding site.

This sequence belongs to the cytochrome P450 family. It depends on heme as a cofactor.

It localises to the membrane. The enzyme catalyses a 14alpha-methyl steroid + 3 reduced [NADPH--hemoprotein reductase] + 3 O2 = a Delta(14) steroid + formate + 3 oxidized [NADPH--hemoprotein reductase] + 4 H2O + 4 H(+). The catalysed reaction is a 14alpha-methyl steroid + reduced [NADPH--hemoprotein reductase] + O2 = a 14alpha-hydroxymethyl steroid + oxidized [NADPH--hemoprotein reductase] + H2O + H(+). It catalyses the reaction a 14alpha-hydroxymethyl steroid + reduced [NADPH--hemoprotein reductase] + O2 = a 14alpha-formyl steroid + oxidized [NADPH--hemoprotein reductase] + 2 H2O + H(+). It carries out the reaction a 14alpha-formyl steroid + reduced [NADPH--hemoprotein reductase] + O2 = a Delta(14) steroid + formate + oxidized [NADPH--hemoprotein reductase] + H2O + 2 H(+). The enzyme catalyses lanosterol + 3 reduced [NADPH--hemoprotein reductase] + 3 O2 = 4,4-dimethyl-5alpha-cholesta-8,14,24-trien-3beta-ol + formate + 3 oxidized [NADPH--hemoprotein reductase] + 4 H2O + 4 H(+). The catalysed reaction is lanosterol + reduced [NADPH--hemoprotein reductase] + O2 = 32-hydroxylanosterol + oxidized [NADPH--hemoprotein reductase] + H2O + H(+). It catalyses the reaction 32-hydroxylanosterol + reduced [NADPH--hemoprotein reductase] + O2 = 32-oxolanosterol + oxidized [NADPH--hemoprotein reductase] + 2 H2O + H(+). It carries out the reaction 32-oxolanosterol + reduced [NADPH--hemoprotein reductase] + O2 = 4,4-dimethyl-5alpha-cholesta-8,14,24-trien-3beta-ol + formate + oxidized [NADPH--hemoprotein reductase] + H2O + 2 H(+). The enzyme catalyses eburicol + 3 reduced [NADPH--hemoprotein reductase] + 3 O2 = 14-demethyleburicol + formate + 3 oxidized [NADPH--hemoprotein reductase] + 4 H2O + 4 H(+). The catalysed reaction is eburicol + reduced [NADPH--hemoprotein reductase] + O2 = 32-hydroxyeburicol + oxidized [NADPH--hemoprotein reductase] + H2O + H(+). It catalyses the reaction 32-hydroxyeburicol + reduced [NADPH--hemoprotein reductase] + O2 = 32-oxoeburicol + oxidized [NADPH--hemoprotein reductase] + 2 H2O + H(+). It carries out the reaction 32-oxoeburicol + reduced [NADPH--hemoprotein reductase] + O2 = 14-demethyleburicol + formate + oxidized [NADPH--hemoprotein reductase] + H2O + 2 H(+). It participates in steroid biosynthesis; zymosterol biosynthesis; zymosterol from lanosterol: step 1/6. Its function is as follows. Sterol 14alpha-demethylase that plays a critical role in the third module of ergosterol biosynthesis pathway, being ergosterol the major sterol component in fungal membranes that participates in a variety of functions. The third module or late pathway involves the ergosterol synthesis itself through consecutive reactions that mainly occur in the endoplasmic reticulum (ER) membrane. In filamentous fungi, during the initial step of this module, lanosterol (lanosta-8,24-dien-3beta-ol) can be metabolized to eburicol. Sterol 14alpha-demethylase catalyzes the three-step oxidative removal of the 14alpha-methyl group (C-32) of both these sterols in the form of formate, and converts eburicol and lanosterol to 14-demethyleburicol (4,4,24-trimethylergosta-8,14,24(28)-trienol) and 4,4-dimethyl-5alpha-cholesta-8,14,24-trien-3beta-ol, respectively, which are further metabolized by other enzymes in the pathway to ergosterol. Can also use substrates not intrinsic to fungi, such as 24,25-dihydrolanosterol (DHL), producing 4,4-dimethyl-8,14-cholestadien-3-beta-ol, but at lower rates than the endogenous substrates. This Mycosarcoma maydis (Corn smut fungus) protein is Lanosterol 14-alpha demethylase (ERG11).